The primary structure comprises 122 residues: UPF0102 protein Cgl2031/cg2228 (122 aa).

Belongs to the UPF0102 family.

The polypeptide is UPF0102 protein Cgl2031/cg2228 (Corynebacterium glutamicum (strain ATCC 13032 / DSM 20300 / JCM 1318 / BCRC 11384 / CCUG 27702 / LMG 3730 / NBRC 12168 / NCIMB 10025 / NRRL B-2784 / 534)).